The following is a 113-amino-acid chain: Transcriptional regulator RamA (113 aa).

The region spanning 9–107 (DTIVEWIDDN…NLPPGAYRKE (99 aa)) is the HTH araC/xylS-type domain. 2 DNA-binding regions (H-T-H motif) span residues 26–47 (DDIA…MQYK) and 74–97 (VYDI…TRTF).

Its function is as follows. Transcriptional regulator. Binds to regulatory regions of target genes, including efflux pump operon acrAB and outer membrane protein gene tolC. Represses transcription of genes belonging to the flagellar regulon, including flhD, flhB and fliC; probably thereby leading to repression of motility. Represses expression of the flhDC operon in a post-transcriptional manner. Activates expression of acrAB, perhaps thereby conferring multidrug resistance. Involved in indole- and bile-mediated regulation of acrAB; binding of bile to RamA may contribute to activation of expression of acrAB. Plays a role in regulating virulence in mice. The sequence is that of Transcriptional regulator RamA from Salmonella typhimurium (strain LT2 / SGSC1412 / ATCC 700720).